The following is a 140-amino-acid chain: Probable prefoldin subunit 6 (140 aa).

The protein belongs to the prefoldin subunit beta family. Heterohexamer of two PFD-alpha type and four PFD-beta type subunits.

In terms of biological role, binds specifically to cytosolic chaperonin (c-CPN) and transfers target proteins to it. Binds to nascent polypeptide chain and promotes folding in an environment in which there are many competing pathways for nonnative proteins. This chain is Probable prefoldin subunit 6 (pfdn6), found in Dictyostelium discoideum (Social amoeba).